The primary structure comprises 571 residues: Glutamine--tRNA ligase (571 aa).

Residues 35 to 45 (PEPNGYLHIGH) carry the 'HIGH' region motif. Residues 36 to 38 (EPN) and 42 to 48 (HIGHAKS) contribute to the ATP site. Residues Asp68 and Tyr213 each coordinate L-glutamine. ATP is bound by residues Thr232, 262-263 (RL), and 270-272 (LSK). The short motif at 269-273 (ILSKR) is the 'KMSKS' region element.

The protein belongs to the class-I aminoacyl-tRNA synthetase family. Monomer.

The protein localises to the cytoplasm. The catalysed reaction is tRNA(Gln) + L-glutamine + ATP = L-glutaminyl-tRNA(Gln) + AMP + diphosphate. The chain is Glutamine--tRNA ligase from Buchnera aphidicola subsp. Acyrthosiphon pisum (strain 5A).